Here is a 497-residue protein sequence, read N- to C-terminus: Probable cytosol aminopeptidase (497 aa).

Residues Lys-262 and Asp-267 each coordinate Mn(2+). Lys-274 is a catalytic residue. Mn(2+) contacts are provided by Asp-285, Asp-344, and Glu-346. The active site involves Arg-348.

It belongs to the peptidase M17 family. Mn(2+) is required as a cofactor.

Its subcellular location is the cytoplasm. The enzyme catalyses Release of an N-terminal amino acid, Xaa-|-Yaa-, in which Xaa is preferably Leu, but may be other amino acids including Pro although not Arg or Lys, and Yaa may be Pro. Amino acid amides and methyl esters are also readily hydrolyzed, but rates on arylamides are exceedingly low.. It catalyses the reaction Release of an N-terminal amino acid, preferentially leucine, but not glutamic or aspartic acids.. Presumably involved in the processing and regular turnover of intracellular proteins. Catalyzes the removal of unsubstituted N-terminal amino acids from various peptides. The chain is Probable cytosol aminopeptidase from Rhizobium etli (strain ATCC 51251 / DSM 11541 / JCM 21823 / NBRC 15573 / CFN 42).